Here is a 419-residue protein sequence, read N- to C-terminus: NF-kappa-B essential modulator (419 aa).

Positions methionine 1–glycine 46 are disordered. The required for interaction with and ubiquitination by MARCHF2 stretch occupies residues methionine 1–valine 197. Phosphoserine occurs at positions 31, 43, 68, and 85. The segment at glutamate 44–lysine 111 is interaction with CHUK/IKBKB. Positions alanine 100–isoleucine 353 form a coiled coil. Residues lysine 111, lysine 139, lysine 143, lysine 226, lysine 246, and lysine 264 each participate in a glycyl lysine isopeptide (Lys-Gly) (interchain with G-Cter in ubiquitin) cross-link. The interaction with TANK stretch occupies residues leucine 150–glycine 257. The ubiquitin-binding (UBAN) stretch occupies residues aspartate 242 to serine 350. The self-association stretch occupies residues lysine 246–glutamine 365. The tract at residues serine 251–glutamate 419 is required for interaction with TNFAIP3. Residue lysine 277 forms a Glycyl lysine isopeptide (Lys-Gly) (interchain with G-Cter in SUMO); alternate linkage. Lysine 277 is covalently cross-linked (Glycyl lysine isopeptide (Lys-Gly) (interchain with G-Cter in ubiquitin); alternate). Glycyl lysine isopeptide (Lys-Gly) (interchain with G-Cter in ubiquitin) cross-links involve residues lysine 283, lysine 285, lysine 292, and lysine 302. Lysine 309 participates in a covalent cross-link: Glycyl lysine isopeptide (Lys-Gly) (interchain with G-Cter in SUMO); alternate. Lysine 309 participates in a covalent cross-link: Glycyl lysine isopeptide (Lys-Gly) (interchain with G-Cter in ubiquitin); alternate. A leucine-zipper region spans residues leucine 322 to leucine 343. A Glycyl lysine isopeptide (Lys-Gly) (interchain with G-Cter in ubiquitin) cross-link involves residue lysine 326. Residues valine 363–asparagine 394 are disordered. A phosphoserine mark is found at serine 376 and serine 387. Residues proline 382–glutamate 419 are interaction with CYLD. Residues proline 389–glutamate 419 form a CCHC NOA-type zinc finger. Cysteine 397 contributes to the Zn(2+) binding site. A Glycyl lysine isopeptide (Lys-Gly) (interchain with G-Cter in ubiquitin) cross-link involves residue lysine 399. Zn(2+)-binding residues include cysteine 400, histidine 413, and cysteine 417.

In terms of assembly, homodimer; disulfide-linked. Component of the I-kappa-B-kinase (IKK) core complex consisting of CHUK, IKBKB and IKBKG; probably four alpha/CHUK-beta/IKBKB dimers are associated with four gamma/IKBKG subunits. The IKK core complex seems to associate with regulatory or adapter proteins to form a IKK-signalosome holo-complex. The IKK complex associates with TERF2IP/RAP1, leading to promote IKK-mediated phosphorylation of RELA/p65. Part of a complex composed of NCOA2, NCOA3, CHUK/IKKA, IKBKB, IKBKG and CREBBP. Interacts with COPS3, CYLD, NALP2, TRPC4AP and PIDD1. Interacts with ATM; the complex is exported from the nucleus. Interacts with TRAF6. Interacts with IKBKE. Interacts with TANK; the interaction is enhanced by IKBKE and TBK1. Part of a ternary complex consisting of TANK, IKBKB and IKBKG. Interacts with ZFAND5. Interacts with RIPK2. Interacts with TNIP1 and TNFAIP3; TNIP1 facilitates the TNFAIP3-mediated de-ubiquitination of IKBKG. Interacts with TNFAIP3; the interaction is induced by TNF stimulation and by polyubiquitin. Binds (via UBAN region) polyubiquitin; binds both 'Lys-63'-linked and linear polyubiquitin, with higher affinity for linear ubiquitin. Interacts with NLRP10. Interacts with TANK; this interaction increases in response to DNA damage. Interacts with USP10; this interaction increases in response to DNA damage. Interacts with ZC3H12A; this interaction increases in response to DNA damage. Interacts with IFIT5; the interaction synergizes the recruitment of IKK to MAP3K7 and enhances IKK phosphorylation. Interacts with TRIM29; this interaction induces IKBKG/NEMO ubiquitination and proteolytic degradation. Interacts with TRIM13; this interaction leads to IKBKG/NEMO ubiquitination. Interacts with ARFIP2. Interacts with RIPK1. Interacts with (ubiquitinated) BCL10; interaction with polyubiquitinated BCL10 via both 'Lys-63'-linked and linear ubiquitin is required for TCR-induced NF-kappa-B activation. Interacts with MARCHF2; during the late stages of macrophage viral and bacterial infection; the interaction leads to ubiquitination and degradation of IKBKG/NEMO. In terms of processing, phosphorylation at Ser-68 attenuates aminoterminal homodimerization. Polyubiquitinated on Lys-285 via 'Lys-63'-linked ubiquitin; the ubiquitination is mediated downstream of NOD2 and RIPK2 and probably plays a role in signaling by facilitating interactions with ubiquitin domain-containing proteins and activates the NF-kappa-B pathway. Polyubiquitinated on Lys-285 and Lys-399 through 'Lys-63'-linked ubiquitin; the ubiquitination is mediated by BCL10, MALT1 and TRAF6 and probably plays a role in signaling by facilitating interactions with ubiquitin domain-containing proteins and activates the NF-kappa-B pathway. Monoubiquitinated on Lys-277 and Lys-309; promotes nuclear export. Polyubiquitinated through 'Lys-27' by TRIM23; involved in antiviral innate and inflammatory responses. Linear polyubiquitinated on Lys-111, Lys-143, Lys-226, Lys-246, Lys-264, Lys-277, Lys-285, Lys-292, Lys-302, Lys-309 and Lys-326; the head-to-tail polyubiquitination is mediated by the LUBAC complex and plays a key role in NF-kappa-B activation. Deubiquitinated by USP10 in a TANK-dependent and -independent manner, leading to the negative regulation of NF-kappa-B signaling upon DNA damage. Ubiquitinated at Lys-326 by MARCHF2 following bacterial and viral infection which leads to its degradation. Post-translationally, sumoylated on Lys-277 and Lys-309 with SUMO1; the modification results in phosphorylation of Ser-85 by ATM leading to a replacement of the sumoylation by mono-ubiquitination on these residues. In terms of processing, neddylated by TRIM40, resulting in stabilization of NFKBIA and down-regulation of NF-kappa-B activity. (Microbial infection) Cleaved by porcine reproductive and respiratory syndrome virus serine protease nsp4 after Glu-349. The cleavage inhibits NEMO proper function.

It localises to the cytoplasm. Its subcellular location is the nucleus. In terms of biological role, regulatory subunit of the IKK core complex which phosphorylates inhibitors of NF-kappa-B thus leading to the dissociation of the inhibitor/NF-kappa-B complex and ultimately the degradation of the inhibitor. Its binding to scaffolding polyubiquitin plays a key role in IKK activation by multiple signaling receptor pathways. Can recognize and bind both 'Lys-63'-linked and linear polyubiquitin upon cell stimulation, with a much highr affinity for linear polyubiquitin. Could be implicated in NF-kappa-B-mediated protection from cytokine toxicity. Essential for viral activation of IRF3. Involved in TLR3- and IFIH1-mediated antiviral innate response; this function requires 'Lys-27'-linked polyubiquitination. The chain is NF-kappa-B essential modulator (IKBKG) from Sus scrofa (Pig).